Reading from the N-terminus, the 336-residue chain is Inositol 2-dehydrogenase (336 aa).

Belongs to the Gfo/Idh/MocA family. In terms of assembly, homotetramer.

It catalyses the reaction myo-inositol + NAD(+) = scyllo-inosose + NADH + H(+). Functionally, involved in the oxidation of myo-inositol (MI) to 2-keto-myo-inositol (2KMI or 2-inosose). This chain is Inositol 2-dehydrogenase, found in Agrobacterium fabrum (strain C58 / ATCC 33970) (Agrobacterium tumefaciens (strain C58)).